The chain runs to 272 residues: uncharacterized protein (272 aa).

This sequence belongs to the chlamydial CPn_0389/CT_041/TC_0311 family.

This is an uncharacterized protein from Chlamydia pneumoniae (Chlamydophila pneumoniae).